We begin with the raw amino-acid sequence, 106 residues long: uncharacterized protein (106 aa).

Residues 78–98 traverse the membrane as a helical segment; it reads LAITGYVVSIPIVLPILIIFI.

The protein resides in the membrane. This is an uncharacterized protein from Haemophilus influenzae (strain ATCC 51907 / DSM 11121 / KW20 / Rd).